A 765-amino-acid polypeptide reads, in one-letter code: uncharacterized protein (765 aa).

This is an uncharacterized protein from Methanocaldococcus jannaschii (strain ATCC 43067 / DSM 2661 / JAL-1 / JCM 10045 / NBRC 100440) (Methanococcus jannaschii).